A 619-amino-acid polypeptide reads, in one-letter code: P-granule-associated protein deps-1 (619 aa).

The required for prg-1 binding stretch occupies residues 62-101; it reads NFDNIEEAKNLERRSKIPLKFGEVILWNESDCDHDKRIIL. Low complexity-rich tracts occupy residues 563–592 and 600–619; these read SRAT…AATS and GPSS…SSRV. Residues 563–619 are disordered; the sequence is SRATSARTTPAGSSIGSRSSIQSRASAATSVSSNRFVGPSSRRTPSGTPQSSTSSRV.

In terms of assembly, interacts (via N-terminus) with prg-1; the interaction is direct. May interact with edg-1. Expressed in germ cells.

It localises to the cytoplasmic granule. It is found in the cytoplasm. The protein localises to the perinuclear region. In terms of biological role, component of P-granules which is required for P-granule formation and integrity in adult germ cells. Promotes the accumulation of glh-1 mRNA and localization of pgl-1 to P-granules. Involved in RNA-mediated gene silencing (RNAi) in the germline. In particular, it is required for piwi-interacting RNA (piRNA) gene silencing and positively regulates the formation of secondary 22G-RNAs, which are RNA-dependent RNA polymerase-derived endo-siRNAs, typically 22 nucleotides in length with a 5'guanosine residue. Its role in RNAi may also be through positively regulating the expression of the dsRNA-binding protein rde-4. Plays a role in small RNA-directed transgenerational epigenetic inheritance. The polypeptide is P-granule-associated protein deps-1 (Caenorhabditis elegans).